The sequence spans 443 residues: KH domain-containing, RNA-binding, signal transduction-associated protein 1 (443 aa).

Residues 1-96 (MQRRDDPAAR…LPPSATASVK (96 aa)) form a disordered region. Positions 10–21 (RMSRSSGRSGSM) are enriched in low complexity. Phosphoserine is present on residues Ser-18, Ser-20, and Ser-29. A Phosphothreonine modification is found at Thr-33. Arg-45 is modified (asymmetric dimethylarginine; by PRMT1). Arg-52 carries the asymmetric dimethylarginine; partial; by PRMT1 modification. Ser-58 is modified (phosphoserine). Phosphothreonine; by MAPK1 is present on Thr-84. Glycyl lysine isopeptide (Lys-Gly) (interchain with G-Cter in SUMO2) cross-links involve residues Lys-96 and Lys-102. The interval 100–260 (ENKYLPELMA…VKKFLVPDMM (161 aa)) is involved in homodimerization. At Ser-113 the chain carries Phosphoserine. A Glycyl lysine isopeptide (Lys-Gly) (interchain with G-Cter in SUMO2) cross-link involves residue Lys-139. At Ser-150 the chain carries Phosphoserine. The KH domain occupies 171-197 (NFVGKILGPQGNTIKRLQEETGAKISV). Lys-175 is modified (N6-acetyllysine; alternate). Residue Lys-175 forms a Glycyl lysine isopeptide (Lys-Gly) (interchain with G-Cter in SUMO2); alternate linkage. Thr-183 carries the post-translational modification Phosphothreonine. Over residues 280-293 (PSRGRGVPVRGRGA) the composition is skewed to low complexity. Residues 280–316 (PSRGRGVPVRGRGAAPPPPPVPRGRGVGPPRGALVRG) are disordered. Omega-N-methylarginine is present on residues Arg-282, Arg-284, and Arg-291. The residue at position 304 (Arg-304) is an Asymmetric dimethylarginine; by PRMT1. Positions 307-316 (GPPRGALVRG) are enriched in low complexity. Omega-N-methylarginine; by PRMT1 occurs at positions 310, 315, 320, and 325. Arg-320 is subject to Dimethylated arginine; in A2780 ovarian carcinoma cell line. Residues 327 to 346 (ATVTRGVPPPPTVRGAPAPR) form a disordered region. Residues Arg-331 and Arg-340 each carry the dimethylated arginine; in A2780 ovarian carcinoma cell line modification. Arg-331 is subject to Asymmetric dimethylarginine; alternate. Arg-331 is modified (omega-N-methylarginine; by PRMT1; alternate). The residue at position 340 (Arg-340) is an Omega-N-methylarginine; by PRMT1. Residues 351–443 (GIQRIPLPPP…AYREHPYGRY (93 aa)) are interaction with HNRNPA1. Phosphotyrosine is present on Tyr-387. Ser-390 is subject to Phosphoserine. Residues 400-420 (GHGEVQDSYEAYGQDDWNGTR) are interaction with ZBTB7A. The segment at 411–443 (YGQDDWNGTRPSLKAPPARPVKGAYREHPYGRY) is disordered. A Glycyl lysine isopeptide (Lys-Gly) (interchain with G-Cter in SUMO2) cross-link involves residue Lys-432. Basic and acidic residues predominate over residues 434–443 (AYREHPYGRY). Phosphotyrosine; by PTK6 occurs at positions 435, 440, and 443.

This sequence belongs to the KHDRBS family. As to quaternary structure, self-associates to form homooligomers when bound to RNA, oligomerization appears to be limited when binding to proteins; dimerization increases RNA affinity. Forms a trimeric complex in the nucleus consisting of BANP, HDAC6 and KHDRBS1/SAM68; HDAC6 keeps KHDRBS1 in a deacetylated state which inhibits the inclusion of CD44 alternate exons. The complex is disrupted by MAPK1/MAPK3-mediated phosphorylation of BANP which results in BANP export to the cytoplasm. This facilitates acetylation of KHDRBS1 and CD44 variant exon inclusion. Interacts with KHDRBS3/SLIM-2. Interacts with KHDRBS2/SLIM-1; heterooligomer formation of KHDRBS family proteins may modulate RNA substrate specificity. Interacts with RASA1, LCK, FYN, PTPN6, PLCG1, GRB2, CBL, JAK3, PIK3R, STAT3, APC, HNRNPA1. Interacts with PTK6 (via SH3 and SH2 domains). Forms a complex with ILF2, ILF3, YLPM1, RBMX, NCOA5 and PPP1CA. Does not interact with TPR. Interacts with PRMT1. Binds WBP4/FBP21 (via WW domains), FNBP4/FBP30 (via WW domains). Interacts (via Arg/Gly-rich-flanked Pro-rich regions) with FYN (via the SH3 domain). Interacts with the non-receptor tyrosine kinase SRMS; the interaction leads to phosphorylation of KHDRBS1. Interacts with ZBTB7A; negatively regulates KHDRBS1 splicing activity toward BCL2L1. In terms of processing, tyrosine phosphorylated by several non-receptor tyrosine kinases including LCK, FYN and JAK3. Also tyrosine phosphorylated by the non-receptor tyrosine kinase SRMS in an EGF-dependent manner. Negatively correlates with ability to bind RNA but required for many interactions with proteins. Phosphorylation by PTK6 negatively regulates its RNA binding ability. Phosphorylation by PTK6 at Tyr-440 dictates the nuclear localization of KHDRBS1. Phosphorylation at Tyr-387 disrupts interaction with APC. Phosphorylation at tyrosine residues by FYN inverts activity on modulation of BCL2L1 alternative splicing. Acetylated. Positively correlates with ability to bind RNA. Deacetylated by HDAC6; this regulates alternative splicing by inhibiting the inclusion of CD44 alternate exons. Post-translationally, arginine methylation is required for nuclear localization. Also can affect interaction with other proteins. Inhibits interaction with Src-like SH3 domains, but not interaction with WW domains of WBP4/FBP21 and FNBP4/FBP30. In terms of tissue distribution, ubiquitously expressed in all tissue examined. Isoform 1 is expressed at lower levels in brain, skeletal muscle, and liver whereas isoform 3 is intensified in skeletal muscle and in liver.

It is found in the nucleus. The protein resides in the cytoplasm. The protein localises to the membrane. Functionally, recruited and tyrosine phosphorylated by several receptor systems, for example the T-cell, leptin and insulin receptors. Once phosphorylated, functions as an adapter protein in signal transduction cascades by binding to SH2 and SH3 domain-containing proteins. Role in G2-M progression in the cell cycle. Represses CBP-dependent transcriptional activation apparently by competing with other nuclear factors for binding to CBP. Also acts as a putative regulator of mRNA stability and/or translation rates and mediates mRNA nuclear export. Positively regulates the association of constitutive transport element (CTE)-containing mRNA with large polyribosomes and translation initiation. According to some authors, is not involved in the nucleocytoplasmic export of unspliced (CTE)-containing RNA species according to. RNA-binding protein that plays a role in the regulation of alternative splicing and influences mRNA splice site selection and exon inclusion. Binds to RNA containing 5'-[AU]UAA-3' as a bipartite motif spaced by more than 15 nucleotides. Binds poly(A). Can regulate CD44 alternative splicing in a Ras pathway-dependent manner. In cooperation with HNRNPA1 modulates alternative splicing of BCL2L1 by promoting splicing toward isoform Bcl-X(S), and of SMN1. Can regulate alternative splicing of NRXN1 and NRXN3 in the laminin G-like domain 6 containing the evolutionary conserved neurexin alternative spliced segment 4 (AS4) involved in neurexin selective targeting to postsynaptic partners. In a neuronal activity-dependent manner cooperates synergistically with KHDRBS2/SLIM-1 in regulation of NRXN1 exon skipping at AS4. The cooperation with KHDRBS2/SLIM-1 is antagonistic for regulation of NXRN3 alternative splicing at AS4. In terms of biological role, isoform 3, which is expressed in growth-arrested cells only, inhibits S phase. The chain is KH domain-containing, RNA-binding, signal transduction-associated protein 1 from Homo sapiens (Human).